The chain runs to 115 residues: MAGMVLGVGAGVFLLALLWVLVLLLCVLLCRASGIARFSIIFVFLGALIITTVLLLFPRASEFPAPQGEMKIVDAFFIGRYVLLAFLSAVFLGGLFLLLTHHVLEPIYAKPLRSC.

The next 3 membrane-spanning stretches (helical) occupy residues Val5–Leu25, Phe38–Pro58, and Tyr81–His101.

This sequence belongs to the TMEM218 family. Interacts with TMEM67.

It is found in the membrane. Its subcellular location is the cell projection. The protein localises to the cilium. Its function is as follows. May be involved in ciliary biogenesis or function. This is Transmembrane protein 218 (Tmem218) from Rattus norvegicus (Rat).